Reading from the N-terminus, the 244-residue chain is Ubiquinone/menaquinone biosynthesis C-methyltransferase UbiE (244 aa).

S-adenosyl-L-methionine is bound by residues Thr-70, Asp-91, and 117 to 118 (DA).

The protein belongs to the class I-like SAM-binding methyltransferase superfamily. MenG/UbiE family.

It carries out the reaction a 2-demethylmenaquinol + S-adenosyl-L-methionine = a menaquinol + S-adenosyl-L-homocysteine + H(+). The enzyme catalyses a 2-methoxy-6-(all-trans-polyprenyl)benzene-1,4-diol + S-adenosyl-L-methionine = a 5-methoxy-2-methyl-3-(all-trans-polyprenyl)benzene-1,4-diol + S-adenosyl-L-homocysteine + H(+). Its pathway is quinol/quinone metabolism; menaquinone biosynthesis; menaquinol from 1,4-dihydroxy-2-naphthoate: step 2/2. The protein operates within cofactor biosynthesis; ubiquinone biosynthesis. Methyltransferase required for the conversion of demethylmenaquinol (DMKH2) to menaquinol (MKH2) and the conversion of 2-polyprenyl-6-methoxy-1,4-benzoquinol (DDMQH2) to 2-polyprenyl-3-methyl-6-methoxy-1,4-benzoquinol (DMQH2). This is Ubiquinone/menaquinone biosynthesis C-methyltransferase UbiE from Chromobacterium violaceum (strain ATCC 12472 / DSM 30191 / JCM 1249 / CCUG 213 / NBRC 12614 / NCIMB 9131 / NCTC 9757 / MK).